The chain runs to 427 residues: MSAIVDIIGREIIDSRGNPTVECDVLLESGVMGRASVPSGASTGSREAIELRDGDKNRYFGKGVLKACENINTEISEAIMGLDANEQAFLDRTLIDLDGTDNKARLGANATLAVSMAVAKAAAEESGLPLYRYFGGSGAMQMPVPMMNVINGGAHANNNLDLQEFMIIPVGAPSFREAIRYGAEVFHTLKKIINDKGLPTSVGDEGGFAPSVENHEAAIKMILQAIEQAGYEPGTQIALGLDCAASEFYKDGKYHLAGEGMSLSSADFTNLLGTWCDKYPIISIEDGMAENDWDGWATLTNALGKKVQLVGDDLFVTNTKILREGIQKNVANSILIKINQIGTLTETFAAIEMAKRAGYTAVISHRSGETEDSTIADIAVGTNSLQIKTGSMSRSDRMAKYNQLLRIEEDLGDIASYPGRNAFYNLK.

Residue Gln163 coordinates (2R)-2-phosphoglycerate. Glu205 acts as the Proton donor in catalysis. Residues Asp242, Glu285, and Asp312 each coordinate Mg(2+). Positions 337, 366, 367, and 388 each coordinate (2R)-2-phosphoglycerate. The active-site Proton acceptor is the Lys337.

It belongs to the enolase family. The cofactor is Mg(2+).

The protein localises to the cytoplasm. Its subcellular location is the secreted. The protein resides in the cell surface. It catalyses the reaction (2R)-2-phosphoglycerate = phosphoenolpyruvate + H2O. Its pathway is carbohydrate degradation; glycolysis; pyruvate from D-glyceraldehyde 3-phosphate: step 4/5. Its function is as follows. Catalyzes the reversible conversion of 2-phosphoglycerate (2-PG) into phosphoenolpyruvate (PEP). It is essential for the degradation of carbohydrates via glycolysis. This Herminiimonas arsenicoxydans protein is Enolase.